The chain runs to 95 residues: Beta-defensin 132 (95 aa).

The signal sequence occupies residues 1-22 (MKFLLLVLAALRFLTQVIPASA). 3 disulfide bridges follow: C27-C55, C35-C49, and C39-C56. The disordered stretch occupies residues 72–95 (GNHWQSRRRNTQRKDKKQQTTVTS). Positions 76 to 87 (QSRRRNTQRKDK) are enriched in basic residues.

The protein belongs to the beta-defensin family.

Its subcellular location is the secreted. Its function is as follows. Has antibacterial activity. This is Beta-defensin 132 (DEFB132) from Pongo pygmaeus (Bornean orangutan).